We begin with the raw amino-acid sequence, 342 residues long: MDMAILPAGVWGTALAVPASAAGRRVRLWRRTPGWAESWDRGHPVLPGLKLPENVVACDSAQAAVSDADLVILSPAGAGLRPVCRLVRPHLRPDAVIVCATKSIEPETHLLVHQVVEEELPGHRGRIVALSGPNFAHEVAAGLPTGAVAACPDLSLADWVQQALMTDRFRVYTNPDLVGVELAGALKNVIALGAGISDGLGMGDNARAALITRGLVEMARLGRAMGANPLTFAGLAGMGDLVLSCTGDSSRNRRAGLAIGRGQSAEAFLAETGLTVEGITTARAGWQLAQRLGVRMPITEAIYQVLYEGLPPLTAMERLMARPRAHELEEVAGADLKPPFDP.

NADPH contacts are provided by Trp11, Arg31, and Lys102. Sn-glycerol 3-phosphate contacts are provided by Lys102 and Gly132. Ala136 contributes to the NADPH binding site. Lys187, Asp240, Ser250, Arg251, and Asn252 together coordinate sn-glycerol 3-phosphate. Lys187 functions as the Proton acceptor in the catalytic mechanism. Residue Arg251 participates in NADPH binding. Glu277 is an NADPH binding site.

This sequence belongs to the NAD-dependent glycerol-3-phosphate dehydrogenase family.

Its subcellular location is the cytoplasm. The catalysed reaction is sn-glycerol 3-phosphate + NAD(+) = dihydroxyacetone phosphate + NADH + H(+). It carries out the reaction sn-glycerol 3-phosphate + NADP(+) = dihydroxyacetone phosphate + NADPH + H(+). It participates in membrane lipid metabolism; glycerophospholipid metabolism. Catalyzes the reduction of the glycolytic intermediate dihydroxyacetone phosphate (DHAP) to sn-glycerol 3-phosphate (G3P), the key precursor for phospholipid synthesis. The protein is Glycerol-3-phosphate dehydrogenase [NAD(P)+] of Symbiobacterium thermophilum (strain DSM 24528 / JCM 14929 / IAM 14863 / T).